A 284-amino-acid chain; its full sequence is Phospholipid phosphatase 1 (284 aa).

Over 1–6 (MFDKTR) the chain is Cytoplasmic. Residues 5 to 7 (TRL) carry the PDZ-binding; involved in localization to the apical cell membrane motif. The chain crosses the membrane as a helical span at residues 7-27 (LPYVALDVLCVLLAGLPFAIL). The Extracellular portion of the chain corresponds to 28–53 (TSRHTPFQRGVFCNDESIKYPYKEDT). A helical transmembrane segment spans residues 54-74 (IPYALLGGIIIPFSIIVIILG). Topologically, residues 75–94 (ETLSVYCNLLHSNSFIRNNY) are cytoplasmic. The chain crosses the membrane as a helical span at residues 95–115 (IATIYKAIGTFLFGAAASQSL). The Extracellular portion of the chain corresponds to 116–164 (TDIAKYSIGRLRPHFLDVCDPDWSKINCSDGYIEYYICRGNAERVKEGR). The interval 120-128 (KYSIGRLRP) is phosphatase sequence motif I. The N-linked (GlcNAc...) asparagine glycan is linked to Asn142. The helical transmembrane segment at 165-185 (LSFYSGHSSFSMYCMLFVALY) threads the bilayer. The interval 168-171 (YSGH) is phosphatase sequence motif II. The active-site Proton donors is His171. At 186-199 (LQARMKGDWARLLR) the chain is on the cytoplasmic side. Residues 200 to 220 (PTLQFGLVAVSIYVGLSRVSD) form a helical membrane-spanning segment. The segment at 216 to 227 (SRVSDYKHHWSD) is phosphatase sequence motif III. At 221-229 (YKHHWSDVL) the chain is on the extracellular side. His223 serves as the catalytic Nucleophile. The chain crosses the membrane as a helical span at residues 230–250 (TGLIQGALVAILVAVYVSDFF). At 251–284 (KERTSFKERKEEDSHTTLHETPTTGNHYPSNHQP) the chain is on the cytoplasmic side. A disordered region spans residues 260 to 284 (KEEDSHTTLHETPTTGNHYPSNHQP). Positions 269 to 284 (HETPTTGNHYPSNHQP) are enriched in polar residues.

This sequence belongs to the PA-phosphatase related phosphoesterase family. Forms functional homodimers and homooligomers that are not required for substrate recognition and catalytic activity. Can also form heterooligomers with PLPP2 and PLPP3. In terms of processing, N-glycosylated. N-linked sugars are of the complex type. N-glycosylation is not required for the phosphatase activity. As to expression, widely expressed with highest expression found in prostate. Found to be down-regulated in colon adenocarcinomas. Predominant in kidney, lung, placenta and liver. In terms of tissue distribution, predominant in heart and pancreas.

It is found in the cell membrane. Its subcellular location is the apical cell membrane. The protein resides in the membrane raft. It localises to the membrane. The protein localises to the caveola. It carries out the reaction a 1,2-diacyl-sn-glycero-3-phosphate + H2O = a 1,2-diacyl-sn-glycerol + phosphate. The enzyme catalyses 1,2-dihexadecanoyl-sn-glycero-3-phosphate + H2O = 1,2-dihexadecanoyl-sn-glycerol + phosphate. The catalysed reaction is 1,2-di-(9Z-octadecenoyl)-sn-glycero-3-phosphate + H2O = 1,2-di-(9Z-octadecenoyl)-sn-glycerol + phosphate. It catalyses the reaction a monoacyl-sn-glycero-3-phosphate + H2O = a monoacylglycerol + phosphate. It carries out the reaction (9Z)-octadecenoyl-sn-glycero-3-phosphate + H2O = (9Z-octadecenoyl)-glycerol + phosphate. The enzyme catalyses a 1-acyl-sn-glycero-3-phosphate + H2O = a 1-acyl-sn-glycerol + phosphate. The catalysed reaction is 1-(9Z-octadecenoyl)-sn-glycero-3-phosphate + H2O = 1-(9Z-octadecenoyl)-sn-glycerol + phosphate. It catalyses the reaction a 1,2-diacyl-sn-glycerol 3-diphosphate + H2O = a 1,2-diacyl-sn-glycero-3-phosphate + phosphate + H(+). It carries out the reaction sphing-4-enine 1-phosphate + H2O = sphing-4-enine + phosphate. The enzyme catalyses an N-acylsphing-4-enine 1-phosphate + H2O = an N-acylsphing-4-enine + phosphate. The catalysed reaction is N-(octanoyl)-sphing-4-enine-1-phosphate + H2O = N-octanoylsphing-4-enine + phosphate. It catalyses the reaction N-(9Z-octadecenoyl)-ethanolamine phosphate + H2O = N-(9Z-octadecenoyl) ethanolamine + phosphate. It carries out the reaction 1-hexadecanoyl-2-(9Z-octadecenoyl)-sn-glycero-3-phosphate + H2O = 1-hexadecanoyl-2-(9Z-octadecenoyl)-sn-glycerol + phosphate. It functions in the pathway lipid metabolism; phospholipid metabolism. Magnesium-independent phospholipid phosphatase. Insensitive to N-ethylmaleimide. Inhibited by sphingosine, zinc ions and modestly by propanolol. Inhibited by vanadate. Magnesium-independent phospholipid phosphatase of the plasma membrane that catalyzes the dephosphorylation of a variety of glycerolipid and sphingolipid phosphate esters including phosphatidate/PA, lysophosphatidate/LPA, diacylglycerol pyrophosphate/DGPP, sphingosine 1-phosphate/S1P and ceramide 1-phosphate/C1P. Also acts on N-oleoyl ethanolamine phosphate/N-(9Z-octadecenoyl)-ethanolamine phosphate, a potential physiological compound. Through its extracellular phosphatase activity allows both the hydrolysis and the cellular uptake of these bioactive lipid mediators from the milieu, regulating signal transduction in different cellular processes. It is for instance essential for the extracellular hydrolysis of S1P and subsequent conversion into intracellular S1P. Involved in the regulation of inflammation, platelets activation, cell proliferation and migration among other processes. May also have an intracellular activity to regulate phospholipid-mediated signaling pathways. The polypeptide is Phospholipid phosphatase 1 (Homo sapiens (Human)).